The following is a 477-amino-acid chain: MQVLHVCSEMFPLLKTGGLADVIGALPAAQIADGVDVRVLLPGFPDIRRGIPDAHVVSRRDTFAGKISLLFGHYNGVGIYLIDAPHLYERPGSPYHDTNLYAYTDNVLRFALLGWVGCEMACGLDPFWRPDVVHAHDWHAGLAPAYLAARGRPAKSVFTVHNLAYQGMFYAKHMDDIELPWSFFNMHGLEFNGQLSFLKAGLYYADHITAVSPTYAREITEPQFAYGMEGLLRQRHLEGRLSGILNGVDEKIWNPESDLLLASRYKRDTLEEKAENKRQLQIAMGLKVNDKVPLFAVVSRLTNQKGLDLVLEALPGLLEQGGQLALLGAGDPVLQEGFLAAAAEHPGQVGVQIGYHEAFSHRIMGGADVILVPSRFEPCGLTQLYGLKYGTLPLVRRTGGLADTVSDSSLENLADGIASGFVFEDSNAWSLLRAIRRAFVLWSRPSLWRFVQRQAMAMDFSWQVAAKSYRELYYRLK.

ADP-alpha-D-glucose is bound at residue K15.

It belongs to the glycosyltransferase 1 family. Bacterial/plant glycogen synthase subfamily.

The catalysed reaction is [(1-&gt;4)-alpha-D-glucosyl](n) + ADP-alpha-D-glucose = [(1-&gt;4)-alpha-D-glucosyl](n+1) + ADP + H(+). Its pathway is glycan biosynthesis; glycogen biosynthesis. Its function is as follows. Synthesizes alpha-1,4-glucan chains using ADP-glucose. In Salmonella choleraesuis (strain SC-B67), this protein is Glycogen synthase.